We begin with the raw amino-acid sequence, 476 residues long: Vitamin D-binding protein (476 aa).

The N-terminal stretch at 1-16 (MKRVLVLLLALAFGHA) is a signal peptide. Albumin domains follow at residues 17-208 (LERG…QMKQ), 209-394 (LLLL…LMKR), and 395-476 (QLTS…ILQS). Disulfide bonds link Cys-29–Cys-75, Cys-74–Cys-83, Cys-96–Cys-112, Cys-111–Cys-122, Cys-145–Cys-190, Cys-189–Cys-198, Cys-220–Cys-266, Cys-265–Cys-273, Cys-286–Cys-300, Cys-299–Cys-311, Cys-335–Cys-376, Cys-375–Cys-384, Cys-407–Cys-453, and Cys-452–Cys-462. N-linked (GlcNAc...) asparagine glycosylation is present at Asn-288. Ser-434 carries the phosphoserine modification.

Belongs to the ALB/AFP/VDB family. As to quaternary structure, associates with membrane-bound immunoglobulin on the surface of B-lymphocytes and with IgG Fc receptor on the membranes of T-lymphocytes. Interacts with LRP2; the interaction is required for renal uptake of GC in complex with 25-hydroxyvitamin D3.

Its subcellular location is the secreted. In terms of biological role, involved in vitamin D transport and storage, scavenging of extracellular G-actin, enhancement of the chemotactic activity of C5 alpha for neutrophils in inflammation and macrophage activation. This is Vitamin D-binding protein (Gc) from Rattus norvegicus (Rat).